A 327-amino-acid chain; its full sequence is MQNSASEFLKPRLIDVQPVSATHARVSMEPFERGYAHTLGNSLRRILLSSMPGYAPTEVTIAGVLHEYSALDGVREDVVDILLNLKGVVLKLHGRDSVVLTLKKEGEGAVLASDIELPHDVEVINPEHVICHISSGGKIDMEVKVEKGRGYQPVSARTSHDDNRSIGTIQLDASFSPVRRVSFAVESARVEQRTDLDRLVLDIETNGVIEPEQAVRNAARILMDQLSIFADLQGTAVEEVVEKAPPIDPILLRPVDDLELTVRSANCLKAENIYYIGDLIQRTETELLKTPNLGRKSLNEIKEVLASKGLTLGMKLENWPPAGLEKP.

The segment at 1–233 (MQNSASEFLK…DQLSIFADLQ (233 aa)) is alpha N-terminal domain (alpha-NTD). The alpha C-terminal domain (alpha-CTD) stretch occupies residues 247–327 (IDPILLRPVD…NWPPAGLEKP (81 aa)).

The protein belongs to the RNA polymerase alpha chain family. Homodimer. The RNAP catalytic core consists of 2 alpha, 1 beta, 1 beta' and 1 omega subunit. When a sigma factor is associated with the core the holoenzyme is formed, which can initiate transcription.

It carries out the reaction RNA(n) + a ribonucleoside 5'-triphosphate = RNA(n+1) + diphosphate. DNA-dependent RNA polymerase catalyzes the transcription of DNA into RNA using the four ribonucleoside triphosphates as substrates. The protein is DNA-directed RNA polymerase subunit alpha of Chromobacterium violaceum (strain ATCC 12472 / DSM 30191 / JCM 1249 / CCUG 213 / NBRC 12614 / NCIMB 9131 / NCTC 9757 / MK).